Reading from the N-terminus, the 98-residue chain is Large ribosomal subunit protein uL23 (98 aa).

This sequence belongs to the universal ribosomal protein uL23 family. In terms of assembly, part of the 50S ribosomal subunit. Contacts protein L29, and trigger factor when it is bound to the ribosome.

Its function is as follows. One of the early assembly proteins it binds 23S rRNA. One of the proteins that surrounds the polypeptide exit tunnel on the outside of the ribosome. Forms the main docking site for trigger factor binding to the ribosome. The sequence is that of Large ribosomal subunit protein uL23 from Rickettsia peacockii (strain Rustic).